We begin with the raw amino-acid sequence, 198 residues long: Carnitine operon protein CaiE (198 aa).

Residues 179-198 are disordered; sequence VEENRPRLKGTTDVKPKSAQ. Positions 180–198 are enriched in basic and acidic residues; sequence EENRPRLKGTTDVKPKSAQ.

The protein belongs to the transferase hexapeptide repeat family.

The protein operates within amine and polyamine metabolism; carnitine metabolism. Its function is as follows. Overproduction of CaiE stimulates the activity of CaiB and CaiD. The chain is Carnitine operon protein CaiE from Salmonella agona (strain SL483).